Consider the following 288-residue polypeptide: Eukaryotic translation initiation factor 3 subunit F-2 (288 aa).

The MPN domain maps to 12 to 149 (VLLHPLVLFQ…TRIFCAVATG (138 aa)).

The protein belongs to the eIF-3 subunit F family. Component of the eukaryotic translation initiation factor 3 (eIF-3) complex. The eIF-3 complex interacts with pix.

The protein resides in the cytoplasm. In terms of biological role, component of the eukaryotic translation initiation factor 3 (eIF-3) complex, which is involved in protein synthesis of a specialized repertoire of mRNAs and, together with other initiation factors, stimulates binding of mRNA and methionyl-tRNAi to the 40S ribosome. The eIF-3 complex specifically targets and initiates translation of a subset of mRNAs involved in cell proliferation. This is Eukaryotic translation initiation factor 3 subunit F-2 from Drosophila persimilis (Fruit fly).